The primary structure comprises 385 residues: 1-deoxy-D-xylulose 5-phosphate reductoisomerase (385 aa).

The NADPH site is built by threonine 10, glycine 11, serine 12, isoleucine 13, lysine 37, and asparagine 124. Lysine 125 is a binding site for 1-deoxy-D-xylulose 5-phosphate. Glutamate 126 lines the NADPH pocket. Aspartate 150 is a Mn(2+) binding site. Residues serine 151, glutamate 152, serine 176, and histidine 199 each coordinate 1-deoxy-D-xylulose 5-phosphate. Residue glutamate 152 coordinates Mn(2+). Residue glycine 205 coordinates NADPH. Residues serine 212, asparagine 217, lysine 218, and glutamate 221 each contribute to the 1-deoxy-D-xylulose 5-phosphate site. Position 221 (glutamate 221) interacts with Mn(2+).

It belongs to the DXR family. Mg(2+) is required as a cofactor. Mn(2+) serves as cofactor.

The catalysed reaction is 2-C-methyl-D-erythritol 4-phosphate + NADP(+) = 1-deoxy-D-xylulose 5-phosphate + NADPH + H(+). The protein operates within isoprenoid biosynthesis; isopentenyl diphosphate biosynthesis via DXP pathway; isopentenyl diphosphate from 1-deoxy-D-xylulose 5-phosphate: step 1/6. Catalyzes the NADPH-dependent rearrangement and reduction of 1-deoxy-D-xylulose-5-phosphate (DXP) to 2-C-methyl-D-erythritol 4-phosphate (MEP). The sequence is that of 1-deoxy-D-xylulose 5-phosphate reductoisomerase from Clostridium botulinum (strain Loch Maree / Type A3).